The primary structure comprises 457 residues: Flavohemoprotein-2 (457 aa).

The 156-residue stretch at 2–157 folds into the Globin domain; sequence ALSEDTIKAV…LADLLIKREE (156 aa). H106 provides a ligand contact to heme b. Catalysis depends on charge relay system residues Y116 and E156. The reductase stretch occupies residues 168–456; that stretch reads GGWRQTRTFR…FEMFGPFKAS (289 aa). In terms of domain architecture, FAD-binding FR-type spans 171–278; the sequence is RQTRTFRVEE…APPYGDFFLR (108 aa). FAD contacts are provided by residues Y210 and 227–230; that span reads RQYS. 320–325 provides a ligand contact to NADP(+); sequence GIGQTP. An FAD-binding site is contributed by 449–452; it reads MFGP.

Belongs to the globin family. Two-domain flavohemoproteins subfamily. The protein in the C-terminal section; belongs to the flavoprotein pyridine nucleotide cytochrome reductase family. In terms of assembly, monomer. The cofactor is heme b. FAD is required as a cofactor.

The enzyme catalyses 2 nitric oxide + NADPH + 2 O2 = 2 nitrate + NADP(+) + H(+). It catalyses the reaction 2 nitric oxide + NADH + 2 O2 = 2 nitrate + NAD(+) + H(+). Its function is as follows. Flavohemoprotein involved in nitric oxide (NO) detoxification in an aerobic process, termed nitric oxide dioxygenase (NOD) reaction that utilizes O(2) and NAD(P)H to convert NO to nitrate, which protects the protozoan parasite from various noxious nitrogen compounds. Therefore, plays a central role in the inducible response to nitrosative stress. May also be involved in O(2) detoxification. The polypeptide is Flavohemoprotein-2 (hmpA-2) (Giardia intestinalis (strain P15) (Giardia lamblia)).